Consider the following 210-residue polypeptide: Large ribosomal subunit protein uL3 (210 aa).

Belongs to the universal ribosomal protein uL3 family. In terms of assembly, part of the 50S ribosomal subunit. Forms a cluster with proteins L14 and L19.

One of the primary rRNA binding proteins, it binds directly near the 3'-end of the 23S rRNA, where it nucleates assembly of the 50S subunit. This is Large ribosomal subunit protein uL3 from Natranaerobius thermophilus (strain ATCC BAA-1301 / DSM 18059 / JW/NM-WN-LF).